The chain runs to 589 residues: Complement component C8 beta chain (589 aa).

Positions methionine 1–glycine 31 are cleaved as a signal peptide. Positions glutamate 32–arginine 53 are excised as a propeptide. The N-linked (GlcNAc...) asparagine glycan is linked to asparagine 43. Residues aspartate 63–arginine 116 enclose the TSP type-1 1 domain. Cystine bridges form between cysteine 64-cysteine 99, cysteine 75-cysteine 109, cysteine 78-cysteine 115, cysteine 121-cysteine 132, cysteine 126-cysteine 145, cysteine 139-cysteine 154, and cysteine 161-cysteine 199. 2 C-linked (Man) tryptophan glycosylation sites follow: tryptophan 69 and tryptophan 72. Positions arginine 120–arginine 155 constitute an LDL-receptor class A domain. Residues leucine 137, asparagine 140, aspartate 142, aspartate 144, aspartate 150, and glutamate 151 each contribute to the Ca(2+) site. Positions isoleucine 157–arginine 503 constitute an MACPF domain. An N-linked (GlcNAc...) asparagine glycan is attached at asparagine 242. The next 4 membrane-spanning stretches (beta stranded) occupy residues serine 251 to lysine 258, glycine 261 to arginine 268, alanine 378 to glycine 385, and valine 391 to serine 398. A disulfide bridge connects residues cysteine 377 and cysteine 402. A Phosphothreonine modification is found at threonine 417. Cystine bridges form between cysteine 502–cysteine 549, cysteine 504–cysteine 520, cysteine 507–cysteine 522, and cysteine 524–cysteine 533. Positions cysteine 504–glutamate 534 constitute an EGF-like domain. The region spanning aspartate 544–leucine 587 is the TSP type-1 2 domain. 2 C-linked (Man) tryptophan glycosylation sites follow: tryptophan 550 and tryptophan 553. A disulfide bond links cysteine 556 and cysteine 589. Residues cysteine 556–cysteine 589 form a disordered region.

The protein belongs to the complement C6/C7/C8/C9 family. Heterotrimer of 3 chains: alpha (C8A), beta (C8B) and gamma (C8G); the alpha and gamma chains are disulfide bonded. Component of the membrane attack complex (MAC), composed of complement C5b, C6, C7, C8A, C8B, C8G and multiple copies of the pore-forming subunit C9. In terms of processing, N-glycosylated; contains one or two bound glycans. Not O-glycosylated.

The protein localises to the secreted. The protein resides in the target cell membrane. Membrane attack complex (MAC) assembly is inhibited by CD59, thereby protecting self-cells from damage during complement activation. CD59 acts by binding to the beta-haipins of C8 (C8A and C8B), forming an intermolecular beta-sheet that prevents incorporation of the multiple copies of C9 required for complete formation of the osmolytic pore. MAC assembly is also inhibited by clusterin (CLU) chaperones that inhibit polymerization of C9. Functionally, component of the membrane attack complex (MAC), a multiprotein complex activated by the complement cascade, which inserts into a target cell membrane and forms a pore, leading to target cell membrane rupture and cell lysis. The MAC is initiated by proteolytic cleavage of C5 into complement C5b in response to the classical, alternative, lectin and GZMK complement pathways. The complement pathways consist in a cascade of proteins that leads to phagocytosis and breakdown of pathogens and signaling that strengthens the adaptive immune system. C8B, together with C8A and C8G, inserts into the target membrane, but does not form pores by itself. During MAC assembly, associates with C5b, C6 and C7 to form the C5b8 intermediate complex that inserts into the target membrane and traverses the bilayer increasing membrane rigidity. This chain is Complement component C8 beta chain (C8b), found in Rattus norvegicus (Rat).